The chain runs to 602 residues: Elongation factor 4 (602 aa).

A tr-type G domain is found at 7–189 (KYIRNFSIVA…AIVNKVPAPD (183 aa)). GTP is bound by residues 19–24 (DHGKST) and 136–139 (NKID).

Belongs to the TRAFAC class translation factor GTPase superfamily. Classic translation factor GTPase family. LepA subfamily.

It is found in the cell membrane. The enzyme catalyses GTP + H2O = GDP + phosphate + H(+). Required for accurate and efficient protein synthesis under certain stress conditions. May act as a fidelity factor of the translation reaction, by catalyzing a one-codon backward translocation of tRNAs on improperly translocated ribosomes. Back-translocation proceeds from a post-translocation (POST) complex to a pre-translocation (PRE) complex, thus giving elongation factor G a second chance to translocate the tRNAs correctly. Binds to ribosomes in a GTP-dependent manner. The sequence is that of Elongation factor 4 from Clostridium botulinum (strain ATCC 19397 / Type A).